Consider the following 125-residue polypeptide: Small ribosomal subunit protein uS13 (125 aa).

This sequence belongs to the universal ribosomal protein uS13 family. In terms of assembly, part of the 30S ribosomal subunit. Forms a loose heterodimer with protein S19. Forms two bridges to the 50S subunit in the 70S ribosome.

Functionally, located at the top of the head of the 30S subunit, it contacts several helices of the 16S rRNA. In the 70S ribosome it contacts the 23S rRNA (bridge B1a) and protein L5 of the 50S subunit (bridge B1b), connecting the 2 subunits; these bridges are implicated in subunit movement. Contacts the tRNAs in the A and P-sites. The protein is Small ribosomal subunit protein uS13 of Gluconacetobacter diazotrophicus (strain ATCC 49037 / DSM 5601 / CCUG 37298 / CIP 103539 / LMG 7603 / PAl5).